Reading from the N-terminus, the 328-residue chain is Tetraacyldisaccharide 4'-kinase (328 aa).

55–62 (TAGGNGKT) lines the ATP pocket.

The protein belongs to the LpxK family.

It catalyses the reaction a lipid A disaccharide + ATP = a lipid IVA + ADP + H(+). It functions in the pathway glycolipid biosynthesis; lipid IV(A) biosynthesis; lipid IV(A) from (3R)-3-hydroxytetradecanoyl-[acyl-carrier-protein] and UDP-N-acetyl-alpha-D-glucosamine: step 6/6. Transfers the gamma-phosphate of ATP to the 4'-position of a tetraacyldisaccharide 1-phosphate intermediate (termed DS-1-P) to form tetraacyldisaccharide 1,4'-bis-phosphate (lipid IVA). The protein is Tetraacyldisaccharide 4'-kinase of Yersinia pseudotuberculosis serotype I (strain IP32953).